We begin with the raw amino-acid sequence, 87 residues long: Protein U62 (87 aa).

The protein belongs to the herpesviridae UL91 family.

The chain is Protein U62 (U62) from Human herpesvirus 6B (strain Z29) (HHV-6 variant B).